The following is a 206-amino-acid chain: Accelerated cell death 11 (206 aa).

An N-acylsphingoid base 1-phosphate is bound by residues Asp-60, Lys-64, Arg-99, Arg-103, and His-143.

The protein belongs to the GLTP family. In terms of assembly, interacts with BPA1, PRA1F2 and PRA1F3.

It localises to the cytoplasm. In terms of biological role, exhibits selective intermembrane transfer of ceramide-1-phosphate (C1P) and phytoceramide-1-phosphate. Does not transport ceramide (Cer) or GalCer, suggesting a requirement for phosphate in the headgroup for functionality. Transports in vitro sphingosine, but not glycosphingolipids. Also has some in vitro activity with sphingomyelin, a lipid not detected in plant tissues. The transport function may be not directly involved in regulating cell death. Rather, perturbations in the function of ACD11 or related components could be monitored by R-proteins, which then mediate defense and programmed cell death (PCD), as proposed in the guard hypothesis. C1P transfer is stimulated by phosphatidylserine in C1P source vesicles. Regulates autophagy, inflammasome mediated IL1B and IL18 processing, and pyroptosis, but not apoptosis. The polypeptide is Accelerated cell death 11 (Arabidopsis thaliana (Mouse-ear cress)).